The primary structure comprises 60 residues: Large ribosomal subunit protein bL33 (60 aa).

It belongs to the bacterial ribosomal protein bL33 family.

The protein is Large ribosomal subunit protein bL33 of Flavobacterium johnsoniae (strain ATCC 17061 / DSM 2064 / JCM 8514 / BCRC 14874 / CCUG 350202 / NBRC 14942 / NCIMB 11054 / UW101) (Cytophaga johnsonae).